The sequence spans 551 residues: Prunin 1 Pru du 6 (551 aa).

The first 20 residues, 1-20 (MAKAFVFSLCLLLVFNGCLA), serve as a signal peptide directing secretion. Cystine bridges form between Cys-32–Cys-65 and Cys-108–Cys-374. One can recognise a Cupin type-1 1 domain in the interval 37-312 (LQAREPDNRI…ALNVNEETAR (276 aa)). Disordered regions lie at residues 111 to 194 (TFEE…QKTR), 238 to 293 (NPRK…NVFS), and 329 to 360 (GNLD…RQQQ). Composition is skewed to low complexity over residues 114-124 (ESQQSSQQGRQ), 132-148 (QQQQ…QQEQ), and 168-185 (QEQQ…QQFR). A Ca(2+)-binding site is contributed by Arg-194. The segment covering 254–275 (QQGQSQPRQQGEQGRPGQHQQP) has biased composition (low complexity). Polar residues predominate over residues 282-293 (QEQQGNGNNVFS). The segment covering 339 to 350 (GRQEREHEERQQ) has biased composition (basic and acidic residues). Residues 351 to 360 (EQLQQERQQQ) are compositionally biased toward low complexity. Positions 367–372 (NGLEET) match the NGXEET; peptidase recognition motif motif. Positions 380 to 529 (ENIGNPERAD…AYQISREQAR (150 aa)) constitute a Cupin type-1 2 domain.

Belongs to the 11S seed storage protein (globulins) family. As to quaternary structure, hexamer of two trimers; each subunit is composed of an acidic and a basic chain derived from a single precursor and linked by a disulfide bond. Proteolytically processed from a single precursor to produce an acidic and a basic chain that are linked by a disulfide bond. As to expression, expressed in seed (at protein level). Expressed in seed.

Functionally, seed storage protein. This is Prunin 1 Pru du 6 from Prunus dulcis (Almond).